Here is a 57-residue protein sequence, read N- to C-terminus: Large ribosomal subunit protein bL32 (57 aa).

Residues 1-20 (MAVPKRRMSRSNTRSRRAQW) show a composition bias toward basic residues. The interval 1 to 22 (MAVPKRRMSRSNTRSRRAQWKA) is disordered.

It belongs to the bacterial ribosomal protein bL32 family.

The polypeptide is Large ribosomal subunit protein bL32 (Mycobacterium sp. (strain JLS)).